Here is a 149-residue protein sequence, read N- to C-terminus: Nucleoside diphosphate kinase (149 aa).

6 residues coordinate ATP: K9, F57, R85, T91, R102, and N112. H115 acts as the Pros-phosphohistidine intermediate in catalysis.

It belongs to the NDK family. It depends on Mg(2+) as a cofactor.

It is found in the cytoplasm. It carries out the reaction a 2'-deoxyribonucleoside 5'-diphosphate + ATP = a 2'-deoxyribonucleoside 5'-triphosphate + ADP. The enzyme catalyses a ribonucleoside 5'-diphosphate + ATP = a ribonucleoside 5'-triphosphate + ADP. Functionally, major role in the synthesis of nucleoside triphosphates other than ATP. The ATP gamma phosphate is transferred to the NDP beta phosphate via a ping-pong mechanism, using a phosphorylated active-site intermediate. The protein is Nucleoside diphosphate kinase of Methanosarcina acetivorans (strain ATCC 35395 / DSM 2834 / JCM 12185 / C2A).